The chain runs to 80 residues: Large ribosomal subunit protein bL31B (80 aa).

It belongs to the bacterial ribosomal protein bL31 family. Type B subfamily. As to quaternary structure, part of the 50S ribosomal subunit.

The sequence is that of Large ribosomal subunit protein bL31B from Xylella fastidiosa (strain M23).